A 291-amino-acid polypeptide reads, in one-letter code: Phosphatidylserine decarboxylase proenzyme (291 aa).

Catalysis depends on charge relay system; for autoendoproteolytic cleavage activity residues D90, H147, and S253. The active-site Schiff-base intermediate with substrate; via pyruvic acid; for decarboxylase activity is S253. Residue S253 is modified to Pyruvic acid (Ser); by autocatalysis.

This sequence belongs to the phosphatidylserine decarboxylase family. PSD-B subfamily. Prokaryotic type I sub-subfamily. As to quaternary structure, heterodimer of a large membrane-associated beta subunit and a small pyruvoyl-containing alpha subunit. The cofactor is pyruvate. In terms of processing, is synthesized initially as an inactive proenzyme. Formation of the active enzyme involves a self-maturation process in which the active site pyruvoyl group is generated from an internal serine residue via an autocatalytic post-translational modification. Two non-identical subunits are generated from the proenzyme in this reaction, and the pyruvate is formed at the N-terminus of the alpha chain, which is derived from the carboxyl end of the proenzyme. The autoendoproteolytic cleavage occurs by a canonical serine protease mechanism, in which the side chain hydroxyl group of the serine supplies its oxygen atom to form the C-terminus of the beta chain, while the remainder of the serine residue undergoes an oxidative deamination to produce ammonia and the pyruvoyl prosthetic group on the alpha chain. During this reaction, the Ser that is part of the protease active site of the proenzyme becomes the pyruvoyl prosthetic group, which constitutes an essential element of the active site of the mature decarboxylase.

The protein localises to the cell membrane. The enzyme catalyses a 1,2-diacyl-sn-glycero-3-phospho-L-serine + H(+) = a 1,2-diacyl-sn-glycero-3-phosphoethanolamine + CO2. It participates in phospholipid metabolism; phosphatidylethanolamine biosynthesis; phosphatidylethanolamine from CDP-diacylglycerol: step 2/2. Its function is as follows. Catalyzes the formation of phosphatidylethanolamine (PtdEtn) from phosphatidylserine (PtdSer). This chain is Phosphatidylserine decarboxylase proenzyme, found in Photobacterium profundum (strain SS9).